Reading from the N-terminus, the 325-residue chain is tRNA N(3)-methylcytidine methyltransferase Mettl2 (325 aa).

S-adenosyl-L-methionine-binding residues include Trp96 and Tyr100. S-adenosyl-L-homocysteine-binding residues include Tyr100, His112, Glu138, Gly140, Asp165, Asp191, and Ile212. 4 residues coordinate S-adenosyl-L-methionine: Gly140, Asp165, Asp191, and Ile212.

Belongs to the methyltransferase superfamily. METL family. As to quaternary structure, interacts with Psn. As to expression, widely expressed. Expressed in ovaries, head, thorax and abdomen of adult flies, and in the CNS of third instar larvae. Isoform 2 is predominantly expressed in larvae and in adult tissues that have been tested.

Probable methyltransferase. This is tRNA N(3)-methylcytidine methyltransferase Mettl2 from Drosophila melanogaster (Fruit fly).